The following is a 205-amino-acid chain: Thymidylate kinase (205 aa).

10 to 17 provides a ligand contact to ATP; it reads GTEGVGKS.

Belongs to the thymidylate kinase family.

The enzyme catalyses dTMP + ATP = dTDP + ADP. Functionally, phosphorylation of dTMP to form dTDP in both de novo and salvage pathways of dTTP synthesis. This Teredinibacter turnerae (strain ATCC 39867 / T7901) protein is Thymidylate kinase.